The following is a 374-amino-acid chain: MPRPIFALISPTALRHNLSVVRQHLNRAAVAAGGVPPSIWAVIKANAYGHGIERALRAFSEAQGLAMLDIEEAVRCREAGWAGPILLLEGFFTPQDIDLLDRYHISTAVHCQEQLDMLARARPSHRINAMVKLNSGMNRLGFSPQAYGAAFEAAQALMRDGVLGSVGKMTHFATADGPQGPQWQWEVFQAATQGLPGPVSVCNSAATLRYPELAAGPGATHWVRPGICLYGASPFSDTPAAAFGLRPAMTLRAEIIGVQQVSPGQTVGYGATFAASKAMRVGVVSCGYADGYPRHCATGTPVTVNGVATRLLGRVSMDMMMVDLDPVPAAGVGAPVVLWGEGGPDVDAVAAAGGTIGYELLTALAARVPVRDAS.

The active-site Proton acceptor; specific for D-alanine is lysine 44. At lysine 44 the chain carries N6-(pyridoxal phosphate)lysine. A substrate-binding site is contributed by arginine 139. The active-site Proton acceptor; specific for L-alanine is the tyrosine 269. Methionine 317 serves as a coordination point for substrate.

Belongs to the alanine racemase family. Pyridoxal 5'-phosphate serves as cofactor.

It catalyses the reaction L-alanine = D-alanine. Its pathway is amino-acid biosynthesis; D-alanine biosynthesis; D-alanine from L-alanine: step 1/1. Catalyzes the interconversion of L-alanine and D-alanine. May also act on other amino acids. The polypeptide is Alanine racemase (alr) (Bordetella avium (strain 197N)).